A 394-amino-acid chain; its full sequence is Elongation factor Tu (394 aa).

In terms of domain architecture, tr-type G spans 10–204 (KPHVNIGTIG…AVDSWIPLPE (195 aa)). The tract at residues 19 to 26 (GHVDHGKT) is G1. 19-26 (GHVDHGKT) is a binding site for GTP. Mg(2+) is bound at residue T26. The G2 stretch occupies residues 60–64 (GITIN). The G3 stretch occupies residues 81-84 (DCPG). Residues 81-85 (DCPGH) and 136-139 (NKCD) contribute to the GTP site. The interval 136-139 (NKCD) is G4. A G5 region spans residues 174–176 (SGL).

The protein belongs to the TRAFAC class translation factor GTPase superfamily. Classic translation factor GTPase family. EF-Tu/EF-1A subfamily. Monomer.

Its subcellular location is the cytoplasm. The catalysed reaction is GTP + H2O = GDP + phosphate + H(+). Functionally, GTP hydrolase that promotes the GTP-dependent binding of aminoacyl-tRNA to the A-site of ribosomes during protein biosynthesis. The chain is Elongation factor Tu from Ureaplasma parvum serovar 3 (strain ATCC 27815 / 27 / NCTC 11736).